The primary structure comprises 454 residues: Tryptophanase (454 aa).

Position 256 is an N6-(pyridoxal phosphate)lysine (Lys-256).

It belongs to the beta-eliminating lyase family. As to quaternary structure, homotetramer. Requires pyridoxal 5'-phosphate as cofactor.

The enzyme catalyses L-tryptophan + H2O = indole + pyruvate + NH4(+). The protein operates within amino-acid degradation; L-tryptophan degradation via pyruvate pathway; indole and pyruvate from L-tryptophan: step 1/1. The polypeptide is Tryptophanase (tnaA) (Rhodobacter capsulatus (Rhodopseudomonas capsulata)).